Consider the following 404-residue polypeptide: Acetate kinase (404 aa).

Asn7 contributes to the Mg(2+) binding site. ATP is bound at residue Lys14. Arg95 contributes to the substrate binding site. Asp152 functions as the Proton donor/acceptor in the catalytic mechanism. Residues 212–216 (HLGNG), 286–288 (DMR), and 334–338 (GIGEN) each bind ATP. Glu388 lines the Mg(2+) pocket.

This sequence belongs to the acetokinase family. As to quaternary structure, homodimer. Requires Mg(2+) as cofactor. It depends on Mn(2+) as a cofactor.

It localises to the cytoplasm. It catalyses the reaction acetate + ATP = acetyl phosphate + ADP. The protein operates within metabolic intermediate biosynthesis; acetyl-CoA biosynthesis; acetyl-CoA from acetate: step 1/2. Its function is as follows. Catalyzes the formation of acetyl phosphate from acetate and ATP. Can also catalyze the reverse reaction. This is Acetate kinase from Nitratidesulfovibrio vulgaris (strain DSM 19637 / Miyazaki F) (Desulfovibrio vulgaris).